Here is a 293-residue protein sequence, read N- to C-terminus: ATP synthase gamma chain (293 aa).

This sequence belongs to the ATPase gamma chain family. F-type ATPases have 2 components, CF(1) - the catalytic core - and CF(0) - the membrane proton channel. CF(1) has five subunits: alpha(3), beta(3), gamma(1), delta(1), epsilon(1). CF(0) has three main subunits: a, b and c.

The protein localises to the cell inner membrane. Functionally, produces ATP from ADP in the presence of a proton gradient across the membrane. The gamma chain is believed to be important in regulating ATPase activity and the flow of protons through the CF(0) complex. The protein is ATP synthase gamma chain of Beijerinckia indica subsp. indica (strain ATCC 9039 / DSM 1715 / NCIMB 8712).